A 289-amino-acid polypeptide reads, in one-letter code: Protoheme IX farnesyltransferase (289 aa).

The next 9 membrane-spanning stretches (helical) occupy residues 9–29, 40–60, 89–109, 110–130, 134–154, 155–175, 190–209, 228–248, and 269–289; these read VALM…PVMM, LIAV…TINC, LTFG…LVNW, PSAL…TLGL, TPSN…IGWS, AVTG…FFWT, YAAA…VVTR, VAST…WFLV, and FHMS…TALV.

The protein belongs to the UbiA prenyltransferase family. Protoheme IX farnesyltransferase subfamily.

It localises to the cell membrane. The enzyme catalyses heme b + (2E,6E)-farnesyl diphosphate + H2O = Fe(II)-heme o + diphosphate. It functions in the pathway porphyrin-containing compound metabolism; heme O biosynthesis; heme O from protoheme: step 1/1. Converts heme B (protoheme IX) to heme O by substitution of the vinyl group on carbon 2 of heme B porphyrin ring with a hydroxyethyl farnesyl side group. In Frankia casuarinae (strain DSM 45818 / CECT 9043 / HFP020203 / CcI3), this protein is Protoheme IX farnesyltransferase.